The following is a 317-amino-acid chain: tRNA dimethylallyltransferase (317 aa).

19–26 (GPTASGKS) contacts ATP. 21–26 (TASGKS) lines the substrate pocket. The interval 44–47 (DSMQ) is interaction with substrate tRNA.

This sequence belongs to the IPP transferase family. In terms of assembly, monomer. Mg(2+) is required as a cofactor.

It catalyses the reaction adenosine(37) in tRNA + dimethylallyl diphosphate = N(6)-dimethylallyladenosine(37) in tRNA + diphosphate. In terms of biological role, catalyzes the transfer of a dimethylallyl group onto the adenine at position 37 in tRNAs that read codons beginning with uridine, leading to the formation of N6-(dimethylallyl)adenosine (i(6)A). In Methylorubrum extorquens (strain CM4 / NCIMB 13688) (Methylobacterium extorquens), this protein is tRNA dimethylallyltransferase.